Here is a 258-residue protein sequence, read N- to C-terminus: Acyl-[acyl-carrier-protein]--UDP-N-acetylglucosamine O-acyltransferase (258 aa).

Belongs to the transferase hexapeptide repeat family. LpxA subfamily. Homotrimer.

The protein localises to the cytoplasm. It carries out the reaction a (3R)-hydroxyacyl-[ACP] + UDP-N-acetyl-alpha-D-glucosamine = a UDP-3-O-[(3R)-3-hydroxyacyl]-N-acetyl-alpha-D-glucosamine + holo-[ACP]. Its pathway is glycolipid biosynthesis; lipid IV(A) biosynthesis; lipid IV(A) from (3R)-3-hydroxytetradecanoyl-[acyl-carrier-protein] and UDP-N-acetyl-alpha-D-glucosamine: step 1/6. In terms of biological role, involved in the biosynthesis of lipid A, a phosphorylated glycolipid that anchors the lipopolysaccharide to the outer membrane of the cell. This is Acyl-[acyl-carrier-protein]--UDP-N-acetylglucosamine O-acyltransferase from Pseudomonas putida (strain GB-1).